Reading from the N-terminus, the 643-residue chain is Chromosomal replication initiator protein DnaA (643 aa).

A domain I, interacts with DnaA modulators region spans residues 1–97 (MADVPADLAA…VDDSAGEPPP (97 aa)). Residues 87–303 (TVDDSAGEPP…ASGPGEPTAR (217 aa)) form a disordered region. The interval 97-302 (PAAPPAQQTP…PASGPGEPTA (206 aa)) is domain II. Over residues 195–209 (SPSSQDAYGSPSQDY) the composition is skewed to polar residues. Residues 222-269 (QRGDYDTPRAEYEPARPDYDSARPDYESARPEYDQRDPVRRELPEPPA) are compositionally biased toward basic and acidic residues. Residues 291-300 (PAPASGPGEP) show a composition bias toward low complexity. The domain III, AAA+ region stretch occupies residues 303–519 (RLNPKYLFDT…GALIRVTAFA (217 aa)). ATP is bound by residues G347, G349, K350, and T351. Residues 520–643 (SLNRQPVDLG…TELTNRIKNG (124 aa)) are domain IV, binds dsDNA.

Belongs to the DnaA family. Oligomerizes as a right-handed, spiral filament on DNA at oriC.

It localises to the cytoplasm. Its function is as follows. Plays an essential role in the initiation and regulation of chromosomal replication. ATP-DnaA binds to the origin of replication (oriC) to initiate formation of the DNA replication initiation complex once per cell cycle. Binds the DnaA box (a 9 base pair repeat at the origin) and separates the double-stranded (ds)DNA. Forms a right-handed helical filament on oriC DNA; dsDNA binds to the exterior of the filament while single-stranded (ss)DNA is stabiized in the filament's interior. The ATP-DnaA-oriC complex binds and stabilizes one strand of the AT-rich DNA unwinding element (DUE), permitting loading of DNA polymerase. After initiation quickly degrades to an ADP-DnaA complex that is not apt for DNA replication. Binds acidic phospholipids. The sequence is that of Chromosomal replication initiator protein DnaA from Streptomyces reticuli.